The chain runs to 225 residues: Techylectin-like protein (225 aa).

Positions 32 to 225 (CPSPPLPIDC…WTEIKIKDVK (194 aa)) constitute a Fibrinogen C-terminal domain. Cys-41 and Cys-60 are disulfide-bonded. The Cell attachment site motif lies at 75–77 (RGD). Ca(2+) is bound by residues Asp-164 and Thr-170. The cysteines at positions 172 and 185 are disulfide-linked.

In terms of tissue distribution, expressed by the venom gland.

The protein localises to the secreted. Lectin involved in innate immunity. This chain is Techylectin-like protein, found in Phoneutria nigriventer (Brazilian armed spider).